Reading from the N-terminus, the 398-residue chain is MTAQGIYLDNNATTRVDPDVLAEMLPLFTEQFGNPSSMHGFGAAVGGQDRMGAQAGAGAARAAHDSEIVFTSGGTESDNTAILSTLEAYPKKKSIVTSVVEHPAVLALCDYLEKKRGYTVHRIGVDNRGNLDLDAYKRCALGPDVAIVSIMWANNETGTIFPIEELAQLAKAAGAVFHTAVQAVGKIPMNVRHSAVDMLCACGHKLHAPKGVHALYVKRGLRFRPIVRGGHQERSRRAGNGERAGHRRAGGGAHVALMHMTDENTRVKRSRQAGAAILAAVPNCFVTGNPANRLPNTCNVAFEYIEGEAILLLLNEADIAASSGSACTSGSLEPSHVMRAMGVPYTAAHGPTRLSLSRETTEEEIDRVIRVVPGMRTGRSVSPYWSQAAPEGVRPVYS.

Pyridoxal 5'-phosphate-binding positions include 74–75, Asn-155, Gln-182, and 202–204; these read GT and CGH. Lys-205 is subject to N6-(pyridoxal phosphate)lysine. A compositionally biased stretch (basic and acidic residues) spans 230 to 244; the sequence is GHQERSRRAGNGERA. The segment at 230-253 is disordered; that stretch reads GHQERSRRAGNGERAGHRRAGGGA. The active-site Cysteine persulfide intermediate is Cys-327. Residue Cys-327 participates in [2Fe-2S] cluster binding.

This sequence belongs to the class-V pyridoxal-phosphate-dependent aminotransferase family. NifS/IscS subfamily. As to quaternary structure, homodimer. Pyridoxal 5'-phosphate is required as a cofactor.

The catalysed reaction is (sulfur carrier)-H + L-cysteine = (sulfur carrier)-SH + L-alanine. In terms of biological role, catalyzes the removal of elemental sulfur atoms from cysteine to produce alanine. Seems to participate in the biosynthesis of the nitrogenase metalloclusters by providing the inorganic sulfur required for the Fe-S core formation. The sequence is that of Cysteine desulfurase from Azospirillum brasilense.